The following is a 150-amino-acid chain: Soluble pyridine nucleotide transhydrogenase (150 aa).

The protein belongs to the class-I pyridine nucleotide-disulfide oxidoreductase family. FAD is required as a cofactor.

The protein localises to the cytoplasm. The catalysed reaction is NAD(+) + NADPH = NADH + NADP(+). In terms of biological role, conversion of NADPH, generated by peripheral catabolic pathways, to NADH, which can enter the respiratory chain for energy generation. The chain is Soluble pyridine nucleotide transhydrogenase (sthA) from Pectobacterium carotovorum subsp. carotovorum (Erwinia carotovora subsp. carotovora).